Here is a 757-residue protein sequence, read N- to C-terminus: Dynamin-related protein DNM1 (757 aa).

The Dynamin-type G domain occupies 25-333 (TLDLPILAVV…LLSHIRDKLP (309 aa)). A G1 motif region spans residues 35–42 (GSQSSGKS). 35–42 (GSQSSGKS) is a binding site for GTP. Positions 61 to 63 (VTR) are G2 motif. A G3 motif region spans residues 175–178 (DLPG). GTP contacts are provided by residues 175 to 179 (DLPGI) and 244 to 247 (TKLD). The tract at residues 244–247 (TKLD) is G4 motif. Residues 274-277 (VNRS) form a G5 motif region. Positions 557–597 (SKLSQQENGQTNGINGTSSISSNIDQDSAKNSDYDDDGIDA) are disordered. Positions 567–580 (TNGINGTSSISSNI) are enriched in low complexity. A Phosphoserine modification is found at serine 629. Residues 670-757 (CELIKRLIVS…KAATLISNIL (88 aa)) enclose the GED domain.

The protein belongs to the TRAFAC class dynamin-like GTPase superfamily. Dynamin/Fzo/YdjA family. In terms of assembly, interacts with FIS1 and MDV1.

Its subcellular location is the mitochondrion outer membrane. The catalysed reaction is GTP + H2O = GDP + phosphate + H(+). Microtubule-associated force-producing protein that participates mitochondrial fission. Fission of mitochondria occurs in many cell types and constitutes an important step in mitochondria morphology, which is balanced between fusion and fission. Functions antagonistically with FZO1. The sequence is that of Dynamin-related protein DNM1 (DNM1) from Saccharomyces cerevisiae (strain ATCC 204508 / S288c) (Baker's yeast).